Consider the following 337-residue polypeptide: Serpentine receptor class alpha-17 (337 aa).

6 consecutive transmembrane segments (helical) span residues 28–48 (LNFV…GLAI), 110–130 (ELYF…SLTF), 155–175 (IIQL…VPLV), 197–217 (FRTA…YLSV), 247–267 (CILI…VNYI), and 282–302 (IAPF…VIYF).

This sequence belongs to the nematode receptor-like protein sra family.

The protein resides in the membrane. The protein is Serpentine receptor class alpha-17 (sra-17) of Caenorhabditis elegans.